The chain runs to 360 residues: Inward rectifier potassium channel 13 (360 aa).

Residues 1-50 are Cytoplasmic-facing; that stretch reads MDSSNCKVNAPLLSQRHRRMVTKDGHSTLQMDGAQRGLVYLRDAWGILMD. A helical membrane pass occupies residues 51–77; the sequence is MRWRWMMLVFSASFVVHWLVFAVLWYA. Residues 78-105 are Extracellular-facing; that stretch reads VAEMNGDLEIDHDVPPENHTICVKHITS. The segment at residues 106-122 is an intramembrane region (helical; Pore-forming); sequence FTAAFSFSLETQLTIGY. A Selectivity filter motif is present at residues 119–124; sequence TIGYGT. Residues 123–131 are Extracellular-facing; that stretch reads GTMFPSGDC. A helical membrane pass occupies residues 132–157; sequence PSAIALLAIQMLLGLMLEAFITGAFV. Topologically, residues 158–360 are cytoplasmic; it reads AKIARPKNRA…FQIAETGLTE (203 aa). Ser287 bears the Phosphoserine; by PKA mark.

This sequence belongs to the inward rectifier-type potassium channel (TC 1.A.2.1) family. KCNJ13 subfamily. As to quaternary structure, homotetramer. Interacts with RAB28; the interaction may facilitate cone outer segments phagocytosis. Post-translationally, phosphorylation at Ser-287 by PKA increases ionic currents. Expressed in retina.

It localises to the membrane. It is found in the cell membrane. It carries out the reaction K(+)(in) = K(+)(out). Its activity is regulated as follows. Inhibited by Ba(2+) and Cs(+), although sensitivity to those inhibitors is much lower than in other Kir channels. Inward rectifier potassium channels are characterized by a greater tendency to allow potassium to flow into the cell rather than out of it. Their voltage dependence is regulated by the concentration of extracellular potassium; as external potassium is raised, the voltage range of the channel opening shifts to more positive voltages. The inward rectification is mainly due to the blockage of outward current by internal magnesium. KCNJ13 has a very low single channel conductance, low sensitivity to block by external barium and cesium, and no dependence of its inward rectification properties on the internal blocking particle magnesium. This Mus musculus (Mouse) protein is Inward rectifier potassium channel 13.